The sequence spans 487 residues: Mu-like prophage FluMu tail sheath protein (487 aa).

This sequence belongs to the myoviridae tail sheath protein family.

Its function is as follows. Major component of the tail. This Haemophilus influenzae (strain ATCC 51907 / DSM 11121 / KW20 / Rd) protein is Mu-like prophage FluMu tail sheath protein.